Reading from the N-terminus, the 333-residue chain is Fatty acid hydroxylase domain-containing protein 2 (333 aa).

6 helical membrane-spanning segments follow: residues 29–49 (FILGSGLLSFVAFWNSVTWHL), 77–97 (ILFFIGAIQVPCLFFWSFNGL), 134–154 (TVLFNQCMVSFPMVVFLYPFL), 168–188 (FHWFLLELAIFTLIEEVLFYY), 215–235 (VISLYAHPIEHVVSNMLPAIV), and 237–257 (PLVMGSHLSSITMWFSLALII). The Fatty acid hydroxylase domain occupies 176-299 (AIFTLIEEVL…LGVLDHLHGT (124 aa)).

Belongs to the sterol desaturase family.

It is found in the cytoplasm. It localises to the membrane. Its function is as follows. Promotes megakaryocyte differentiation by enhancing ERK phosphorylation and up-regulating RUNX1 expression. This is Fatty acid hydroxylase domain-containing protein 2 (FAXDC2) from Macaca fascicularis (Crab-eating macaque).